We begin with the raw amino-acid sequence, 84 residues long: MSEKIRTMQGRVISDKMDKSIVVAIERMVKHPIYGKYIKRTTKLHAHDENNECGQGDLVVIRECRPLSKTKSWTLVNIVEKAKA.

The protein belongs to the universal ribosomal protein uS17 family. In terms of assembly, part of the 30S ribosomal subunit.

Functionally, one of the primary rRNA binding proteins, it binds specifically to the 5'-end of 16S ribosomal RNA. In Aliivibrio salmonicida (strain LFI1238) (Vibrio salmonicida (strain LFI1238)), this protein is Small ribosomal subunit protein uS17.